A 470-amino-acid chain; its full sequence is Pyruvate kinase I (470 aa).

A substrate-binding site is contributed by Arg-32. Positions 34, 36, 66, and 67 each coordinate K(+). 34–37 (NFSH) contributes to the ATP binding site. 2 residues coordinate ATP: Arg-73 and Lys-156. Position 220 (Lys-220) interacts with substrate. Glu-222 contacts Mg(2+). Gly-245, Asp-246, and Thr-278 together coordinate substrate. Mg(2+) is bound at residue Asp-246.

It belongs to the pyruvate kinase family. In terms of assembly, homotetramer. Mg(2+) is required as a cofactor. The cofactor is K(+).

It catalyses the reaction pyruvate + ATP = phosphoenolpyruvate + ADP + H(+). It participates in carbohydrate degradation; glycolysis; pyruvate from D-glyceraldehyde 3-phosphate: step 5/5. With respect to regulation, belongs to type I PK; fructose 1,6-bisphosphate-activated. Catalyzes the formation of pyruvate in the last step of glycolysis, it is irreversible under physiological conditions. The reaction is critical for the control of metabolic flux in the second part of glycolysis. This chain is Pyruvate kinase I (pykF), found in Salmonella typhimurium (strain LT2 / SGSC1412 / ATCC 700720).